Consider the following 107-residue polypeptide: Large ribosomal subunit protein uL24 (107 aa).

It belongs to the universal ribosomal protein uL24 family. As to quaternary structure, part of the 50S ribosomal subunit.

Its function is as follows. One of two assembly initiator proteins, it binds directly to the 5'-end of the 23S rRNA, where it nucleates assembly of the 50S subunit. Functionally, one of the proteins that surrounds the polypeptide exit tunnel on the outside of the subunit. In Thiobacillus denitrificans (strain ATCC 25259 / T1), this protein is Large ribosomal subunit protein uL24.